Reading from the N-terminus, the 38-residue chain is MKVRASVKPMCKDCKIIKRKGAVRVICKTSPKHKQRQG.

It belongs to the bacterial ribosomal protein bL36 family.

In Mycoplasma mobile (strain ATCC 43663 / 163K / NCTC 11711) (Mesomycoplasma mobile), this protein is Large ribosomal subunit protein bL36.